Here is a 420-residue protein sequence, read N- to C-terminus: UDP-N-acetyl-D-mannosamine dehydrogenase (420 aa).

Residues Y13, I14, D33, T85, and T126 each coordinate NAD(+). UDP-N-acetyl-alpha-D-mannosaminouronate-binding residues include R160, V161, K212, N216, R219, H250, R252, and G263. Residue K212 is the Proton donor/acceptor of the active site. The active-site Nucleophile is C266. 2 residues coordinate UDP-N-acetyl-alpha-D-mannosaminouronate: F330 and K331. Position 338 (R338) interacts with NAD(+). K416 is a binding site for UDP-N-acetyl-alpha-D-mannosaminouronate.

This sequence belongs to the UDP-glucose/GDP-mannose dehydrogenase family. WecC subfamily. As to quaternary structure, homodimer.

It carries out the reaction UDP-N-acetyl-alpha-D-mannosamine + 2 NAD(+) + H2O = UDP-N-acetyl-alpha-D-mannosaminouronate + 2 NADH + 3 H(+). It participates in bacterial outer membrane biogenesis; enterobacterial common antigen biosynthesis. Its function is as follows. Catalyzes the four-electron oxidation of UDP-N-acetyl-D-mannosamine (UDP-ManNAc), reducing NAD(+) and releasing UDP-N-acetylmannosaminuronic acid (UDP-ManNAcA). This chain is UDP-N-acetyl-D-mannosamine dehydrogenase, found in Shigella flexneri.